A 145-amino-acid polypeptide reads, in one-letter code: Large ribosomal subunit protein uL13 (145 aa).

This sequence belongs to the universal ribosomal protein uL13 family. Part of the 50S ribosomal subunit.

Its function is as follows. This protein is one of the early assembly proteins of the 50S ribosomal subunit, although it is not seen to bind rRNA by itself. It is important during the early stages of 50S assembly. The sequence is that of Large ribosomal subunit protein uL13 from Exiguobacterium sibiricum (strain DSM 17290 / CCUG 55495 / CIP 109462 / JCM 13490 / 255-15).